A 421-amino-acid polypeptide reads, in one-letter code: C4-dicarboxylate transport protein (421 aa).

The next 8 helical transmembrane spans lie at 9–29 (VQVI…PDVG), 39–59 (FINA…VLGI), 76–96 (FIYF…VVNI), 145–165 (GDIL…AALG), 185–205 (IIGY…AYTI), 219–239 (LMMS…NIIC), 316–336 (VFGV…LMLT), and 348–368 (FIVL…GLAL).

This sequence belongs to the dicarboxylate/amino acid:cation symporter (DAACS) (TC 2.A.23) family.

The protein resides in the cell membrane. Its function is as follows. Responsible for the transport of succinate and fumarate, but not malate, across the membrane. This Bacillus subtilis (strain 168) protein is C4-dicarboxylate transport protein (dctA).